Reading from the N-terminus, the 384-residue chain is Isoafricanol synthase (384 aa).

The Mg(2+) site is built by Asp95, Asn245, Ser249, and Glu253.

Belongs to the terpene synthase family. Mg(2+) is required as a cofactor.

The enzyme catalyses (2E,6E)-farnesyl diphosphate + H2O = (+)-isoafricanol + diphosphate. Its function is as follows. Catalyzes the cyclization of farnesyl diphosphate (FPP) to isoafricanol. The chain is Isoafricanol synthase from Streptomyces violaceusniger (strain Tu 4113).